The primary structure comprises 435 residues: Serine--tRNA ligase (435 aa).

238–240 is a binding site for L-serine; it reads TAE. 269 to 271 serves as a coordination point for ATP; that stretch reads RKE. An L-serine-binding site is contributed by Glu292. 356–359 serves as a coordination point for ATP; sequence EISS. Ser391 contacts L-serine.

This sequence belongs to the class-II aminoacyl-tRNA synthetase family. Type-1 seryl-tRNA synthetase subfamily. Homodimer. The tRNA molecule binds across the dimer.

It localises to the cytoplasm. The enzyme catalyses tRNA(Ser) + L-serine + ATP = L-seryl-tRNA(Ser) + AMP + diphosphate + H(+). The catalysed reaction is tRNA(Sec) + L-serine + ATP = L-seryl-tRNA(Sec) + AMP + diphosphate + H(+). It participates in aminoacyl-tRNA biosynthesis; selenocysteinyl-tRNA(Sec) biosynthesis; L-seryl-tRNA(Sec) from L-serine and tRNA(Sec): step 1/1. In terms of biological role, catalyzes the attachment of serine to tRNA(Ser). Is also able to aminoacylate tRNA(Sec) with serine, to form the misacylated tRNA L-seryl-tRNA(Sec), which will be further converted into selenocysteinyl-tRNA(Sec). This is Serine--tRNA ligase from Leuconostoc mesenteroides subsp. mesenteroides (strain ATCC 8293 / DSM 20343 / BCRC 11652 / CCM 1803 / JCM 6124 / NCDO 523 / NBRC 100496 / NCIMB 8023 / NCTC 12954 / NRRL B-1118 / 37Y).